A 211-amino-acid chain; its full sequence is B3 domain-containing protein At5g42700 (211 aa).

Positions 110–201 form a DNA-binding region, TF-B3; that stretch reads FVKSMLQSHV…AFKVYITRVG (92 aa).

The protein resides in the nucleus. This chain is B3 domain-containing protein At5g42700, found in Arabidopsis thaliana (Mouse-ear cress).